Consider the following 82-residue polypeptide: Beta-defensin 119 (82 aa).

The N-terminal stretch at 1-19 (MKFFLFFVILLAMEPVISG) is a signal peptide. 3 disulfides stabilise this stretch: C26/C53, C33/C47, and C37/C54.

It belongs to the beta-defensin family.

The protein resides in the secreted. Its function is as follows. Has antibacterial activity. In Canis lupus familiaris (Dog), this protein is Beta-defensin 119 (DEFB119).